The primary structure comprises 319 residues: tRNA pseudouridine synthase B (319 aa).

D49 serves as the catalytic Nucleophile.

The protein belongs to the pseudouridine synthase TruB family. Type 1 subfamily.

The enzyme catalyses uridine(55) in tRNA = pseudouridine(55) in tRNA. Its function is as follows. Responsible for synthesis of pseudouridine from uracil-55 in the psi GC loop of transfer RNAs. The polypeptide is tRNA pseudouridine synthase B (Bartonella henselae (strain ATCC 49882 / DSM 28221 / CCUG 30454 / Houston 1) (Rochalimaea henselae)).